Consider the following 156-residue polypeptide: Arginine repressor (156 aa).

The protein belongs to the ArgR family.

Its subcellular location is the cytoplasm. It functions in the pathway amino-acid biosynthesis; L-arginine biosynthesis [regulation]. Regulates arginine biosynthesis genes. This is Arginine repressor from Tolumonas auensis (strain DSM 9187 / NBRC 110442 / TA 4).